Here is a 196-residue protein sequence, read N- to C-terminus: Small ribosomal subunit protein uS4c (196 aa).

The tract at residues 16 to 36 (GTLPGLTSKRPKSGSDLKTQL) is disordered. The S4 RNA-binding domain occupies 89-150 (MRLDNILFRL…KQRSKALIQN (62 aa)).

The protein belongs to the universal ribosomal protein uS4 family. Part of the 30S ribosomal subunit. Contacts protein S5. The interaction surface between S4 and S5 is involved in control of translational fidelity.

Its subcellular location is the plastid. The protein resides in the chloroplast. In terms of biological role, one of the primary rRNA binding proteins, it binds directly to 16S rRNA where it nucleates assembly of the body of the 30S subunit. Functionally, with S5 and S12 plays an important role in translational accuracy. The sequence is that of Small ribosomal subunit protein uS4c (rps4) from Rhapis humilis (Slender lady palm).